A 666-amino-acid chain; its full sequence is Probable potassium transport system protein Kup (666 aa).

12 consecutive transmembrane segments (helical) span residues Gly16–Met36, Ile58–Leu78, Pro100–Thr120, Ile141–Gly161, Phe165–Leu185, Ile221–Leu241, Trp253–Ala273, Leu292–Ile312, Leu343–Phe363, Tyr373–Ile393, Pro399–Ala419, and Phe424–Ile444.

It belongs to the HAK/KUP transporter (TC 2.A.72) family.

The protein resides in the cell membrane. The enzyme catalyses K(+)(in) + H(+)(in) = K(+)(out) + H(+)(out). Functionally, transport of potassium into the cell. Likely operates as a K(+):H(+) symporter. The polypeptide is Probable potassium transport system protein Kup (Streptococcus pyogenes serotype M5 (strain Manfredo)).